A 259-amino-acid chain; its full sequence is Phosphatidylglycerol--prolipoprotein diacylglyceryl transferase (259 aa).

7 helical membrane-spanning segments follow: residues 9–29 (LGPLAIRWYSICIVTGLILAV), 48–68 (DFILIAFPLAIVGARLYYVIF), 83–103 (IWHGGIAIYGGLLTGALVLFI), 114–133 (DFLDVATPGVMLAQSIGRWG), 167–187 (TPTFLYESLWNLLGFIIIMIL), 197–217 (GEVAFFYLIWYGSGRFVIEGM), and 227–247 (LRVSQWLSVLLVVVGVILIVI). Residue arginine 131 coordinates a 1,2-diacyl-sn-glycero-3-phospho-(1'-sn-glycerol).

Belongs to the Lgt family.

The protein localises to the cell membrane. The enzyme catalyses L-cysteinyl-[prolipoprotein] + a 1,2-diacyl-sn-glycero-3-phospho-(1'-sn-glycerol) = an S-1,2-diacyl-sn-glyceryl-L-cysteinyl-[prolipoprotein] + sn-glycerol 1-phosphate + H(+). Its pathway is protein modification; lipoprotein biosynthesis (diacylglyceryl transfer). In terms of biological role, catalyzes the transfer of the diacylglyceryl group from phosphatidylglycerol to the sulfhydryl group of the N-terminal cysteine of a prolipoprotein, the first step in the formation of mature lipoproteins. The chain is Phosphatidylglycerol--prolipoprotein diacylglyceryl transferase from Streptococcus mutans serotype c (strain ATCC 700610 / UA159).